A 470-amino-acid chain; its full sequence is Pyruvate kinase I (470 aa).

Arg-32 contacts substrate. 4 residues coordinate K(+): Asn-34, Ser-36, Asp-66, and Thr-67. 34–37 (NFSH) serves as a coordination point for ATP. ATP contacts are provided by Arg-73 and Lys-156. Lys-220 provides a ligand contact to substrate. Mg(2+) is bound at residue Glu-222. Positions 245, 246, and 278 each coordinate substrate. Asp-246 is a binding site for Mg(2+).

This sequence belongs to the pyruvate kinase family. Homotetramer. Mg(2+) serves as cofactor. Requires K(+) as cofactor.

It catalyses the reaction pyruvate + ATP = phosphoenolpyruvate + ADP + H(+). Its pathway is carbohydrate degradation; glycolysis; pyruvate from D-glyceraldehyde 3-phosphate: step 5/5. Its activity is regulated as follows. Belongs to type I PK; fructose 1,6-bisphosphate-activated. Catalyzes the formation of pyruvate in the last step of glycolysis, it is irreversible under physiological conditions. The reaction is critical for the control of metabolic flux in the second part of glycolysis. This chain is Pyruvate kinase I (pykF), found in Salmonella typhimurium (strain LT2 / SGSC1412 / ATCC 700720).